The chain runs to 498 residues: Thiamine transporter 1 (498 aa).

Residue Met1 is modified to N-acetylmethionine. Residues 1 to 28 are Cytoplasmic-facing; it reads MDVPARVSRRAAAAAARMLLRTARVPRE. The helical transmembrane segment at 29–46 threads the bilayer; the sequence is CWFLPTALLCAYGFFANL. The Extracellular portion of the chain corresponds to 47–71; that stretch reads RPSEPFLTPYLLGPDKNLTERQVYN. N-linked (GlcNAc...) asparagine glycosylation occurs at Asn63. A helical membrane pass occupies residues 72–92; it reads EIYPVWTYSYLLLLFPVFLAT. Over 93 to 105 the chain is Cytoplasmic; it reads DYLRYKPVILLQG. Residues 106-126 traverse the membrane as a helical segment; the sequence is LSLIVTWFMLLYAQGLLAIQF. Over 127 to 128 the chain is Extracellular; the sequence is LE. The helical transmembrane segment at 129–149 threads the bilayer; the sequence is FFYGIATATEIAYYSYIYTVV. The Cytoplasmic portion of the chain corresponds to 150 to 164; sequence DLGMYQKVTSYCRSA. The helical transmembrane segment at 165–185 threads the bilayer; sequence TLVGFTVGSVLGQILVSVVGW. Position 186 (Ser186) is a topological domain, extracellular. The chain crosses the membrane as a helical span at residues 187-207; that stretch reads LFSLNVISLTCVSVAFAVAWF. At 208 to 295 the chain is on the cytoplasmic side; that stretch reads LPMPQKSLFF…DFLMCYSSRP (88 aa). At Ser222 the chain carries Phosphoserine. The chain crosses the membrane as a helical span at residues 296 to 316; it reads LLCWSVWWALSTCGYFQVVNY. Residues 317–334 lie on the Extracellular side of the membrane; it reads AQGLWEKVMPSQNADIYN. The helical transmembrane segment at 335-355 threads the bilayer; the sequence is GGVEAVSTLLGASAVFAVGYI. The Cytoplasmic segment spans residues 356-360; the sequence is KLSWS. A helical transmembrane segment spans residues 361–381; that stretch reads TWGEMTLFLCSLLIAAAVYVM. Residues 382-386 are Extracellular-facing; it reads DTVQS. A helical membrane pass occupies residues 387–407; sequence IWVCYASYVVFRIIYMVLITI. Over 408–423 the chain is Cytoplasmic; that stretch reads ATFQIAANLSMERYAL. The helical transmembrane segment at 424 to 444 threads the bilayer; the sequence is VFGVNTFIALALQTLLTLIVV. The Extracellular portion of the chain corresponds to 445 to 456; the sequence is DARGLGLCITTQ. The helical transmembrane segment at 457-477 threads the bilayer; it reads FLIYASYFAAISVVFLANGIV. Over 478 to 498 the chain is Cytoplasmic; sequence SIIKKCRKQEDPSSSPQASTS.

This sequence belongs to the reduced folate carrier (RFC) transporter (TC 2.A.48) family. In terms of assembly, interacts with TSPAN1; this interaction increases the stability of SLC19A2. Interacts with TMEM63B. In terms of tissue distribution, expressed in liver. Expressed in cochlear hair cells and duodenum (at protein level). Detected in pancreatic acinar cells (at protein level). Also expressed strongly in pancreatic islet cells. Expressed in the testis. Very highly expressed in liver, and also detected at lower levels in heart, testis, kidney, brain and spleen. As to expression, expressed at low levels in liver and spleen.

It is found in the cell membrane. It carries out the reaction thiamine(out) + H(+)(in) = thiamine(in) + H(+)(out). The catalysed reaction is pyridoxine(out) + n H(+)(out) = pyridoxine(in) + n H(+)(in). Functionally, high-affinity transporter for the intake of thiamine. Essential for spermatogenesis. Mediates H(+)-dependent pyridoxine transport. The sequence is that of Thiamine transporter 1 from Mus musculus (Mouse).